The sequence spans 53 residues: ATP synthase protein 8 (53 aa).

A helical transmembrane segment spans residues 9 to 29 (WIFFLFFFICIFLIFNIMNYF).

The protein belongs to the ATPase protein 8 family. In terms of assembly, F-type ATPases have 2 components, CF(1) - the catalytic core - and CF(0) - the membrane proton channel.

Its subcellular location is the mitochondrion membrane. Functionally, mitochondrial membrane ATP synthase (F(1)F(0) ATP synthase or Complex V) produces ATP from ADP in the presence of a proton gradient across the membrane which is generated by electron transport complexes of the respiratory chain. F-type ATPases consist of two structural domains, F(1) - containing the extramembraneous catalytic core and F(0) - containing the membrane proton channel, linked together by a central stalk and a peripheral stalk. During catalysis, ATP synthesis in the catalytic domain of F(1) is coupled via a rotary mechanism of the central stalk subunits to proton translocation. Part of the complex F(0) domain. Minor subunit located with subunit a in the membrane. In Bombyx mori (Silk moth), this protein is ATP synthase protein 8 (mt:ATPase8).